The following is a 314-amino-acid chain: Taste receptor type 2 member 42 (314 aa).

The Extracellular segment spans residues 1 to 7 (MATELDK). Residues 8–28 (IFLILEIAEFIIGMLGNVFIG) form a helical membrane-spanning segment. The Cytoplasmic segment spans residues 29–50 (LVNCSEGIKNQKVFSADFILTC). The helical transmembrane segment at 51–71 (LAISTIGQLFVILFDSFLVGL) threads the bilayer. Residues 72–101 (ASHLYTTYRLGKPVIMLWHMTNHLTTWLAT) are Extracellular-facing. A helical membrane pass occupies residues 102–122 (CLSIFYFFKIAHFPHSLFLWL). The Cytoplasmic segment spans residues 123-127 (RWRMN). A helical transmembrane segment spans residues 128 to 148 (GMIVMLLILSLFLLIFNSLVL). Residues 149–187 (EIFIDISLNIIDKSNLTLYLDESKTVYDKLSILKTLLSL) lie on the Extracellular side of the membrane. The N-linked (GlcNAc...) asparagine glycan is linked to N163. Residues 188–208 (TSFIPFSLSLTSLLFLFLSLV) traverse the membrane as a helical segment. Over 209–238 (RHTRNLKLSSLGSRDSSTEAHRRAMKMVMS) the chain is Cytoplasmic. Residues 239-259 (FLFLFIVHFFSLQVANWIFFM) form a helical membrane-spanning segment. Topologically, residues 260–265 (LWNNKY) are extracellular. The chain crosses the membrane as a helical span at residues 266 to 286 (IKFAMLALNAFPSCHSFILIL). Topologically, residues 287–314 (GNSKLRQTAVRLLWHLRNYTKTPNPLPL) are cytoplasmic.

The protein belongs to the G-protein coupled receptor T2R family.

The protein resides in the membrane. Its function is as follows. Receptor that may play a role in the perception of bitterness and is gustducin-linked. May play a role in sensing the chemical composition of the gastrointestinal content. The activity of this receptor may stimulate alpha gustducin, mediate PLC-beta-2 activation and lead to the gating of TRPM5. The protein is Taste receptor type 2 member 42 (TAS2R42) of Pan troglodytes (Chimpanzee).